We begin with the raw amino-acid sequence, 199 residues long: MRTATITRETKETQIYLTLDLDGSGRSEIDTNIGFLDHMLTLLAFHSDFDIKLTAHGDHENSGMDPHHLIEDVAISLGKCINEALGDKLGIRRYGSFTIPMDEALVTCDLDISGRPYLVFNADLSGNKKLGGYDTEMTEEFFRALAFNAGITLHLNEHYGKNTHHIIEGIFKSMARALKQAISIDETKVGKIPSSKGVL.

This sequence belongs to the imidazoleglycerol-phosphate dehydratase family.

It is found in the cytoplasm. It carries out the reaction D-erythro-1-(imidazol-4-yl)glycerol 3-phosphate = 3-(imidazol-4-yl)-2-oxopropyl phosphate + H2O. It participates in amino-acid biosynthesis; L-histidine biosynthesis; L-histidine from 5-phospho-alpha-D-ribose 1-diphosphate: step 6/9. The chain is Imidazoleglycerol-phosphate dehydratase from Lactococcus lactis subsp. cremoris (strain MG1363).